Reading from the N-terminus, the 2009-residue chain is Protein Daple (2009 aa).

One can recognise a Calponin-homology (CH) domain in the interval Leu-11 to Ala-131. The segment at Gln-221 to His-251 is disordered. Residues Ser-227 and Ser-239 each carry the phosphoserine modification. Residues Ser-232–Ser-245 are compositionally biased toward low complexity. Coiled coils occupy residues Glu-247 to Ser-425 and Glu-456 to Gly-1008. Ser-486 carries the phosphoserine modification. Positions Leu-1002–His-1036 are disordered. Residues Ser-1025–His-1036 are compositionally biased toward basic and acidic residues. Residues His-1190 to Lys-1384 adopt a coiled-coil conformation. Residues Lys-1410–Ser-1419 show a composition bias toward basic and acidic residues. Disordered regions lie at residues Lys-1410–Met-1716 and Gly-1757–Val-1787. Residues Pro-1430–Ser-1439 are compositionally biased toward low complexity. Position 1435 is a phosphoserine (Ser-1435). The segment covering Gln-1440–Pro-1449 has biased composition (polar residues). 2 stretches are compositionally biased toward low complexity: residues Thr-1510–Thr-1524 and Asn-1562–Gly-1581. Ser-1592 carries the post-translational modification Phosphoserine. The GBA signature appears at His-1652–Cys-1683. Residues Pro-1681 to Asp-1697 are compositionally biased toward basic and acidic residues. A compositionally biased stretch (polar residues) spans Arg-1761–Cys-1783. The residue at position 1798 (Ser-1798) is a Phosphoserine. The segment at Ser-1808–Val-2009 is disordered. A compositionally biased stretch (basic and acidic residues) spans Arg-1866–Leu-1883. The segment covering Gly-1898–Ser-1911 has biased composition (polar residues). A compositionally biased stretch (gly residues) spans Thr-1943 to Tyr-1954. Positions Ser-1981–Ala-1991 are enriched in polar residues. Residues Tyr-2006–Val-2009 carry the PDZ-binding motif. The tract at residues Gly-2007–Val-2009 is DVL1-binding.

Belongs to the CCDC88 family. Homooligomer. Interacts with DVL1 (via PDZ domain); dissociates following initiation of non-canonical Wnt signaling. Interacts (via C-terminus) with ligand-activated Wnt receptor FZD7; competes with DVL1 for binding to FZD7 and displaces DVL1 from ligand-activated FZD7. Interacts (via GBA motif) with guanine nucleotide-binding protein G(i) alpha subunits GNAI1, GNAI2 and GNAI3 (inactive GDP-bound form); interacts with higher affinity with GNAI1 and GNAI3 than with GNAI2 and interaction leads to G(i) alpha subunit activation. Does not interact with GNAO1.

The protein localises to the cytoplasm. Its subcellular location is the cell junction. Required for activation of guanine nucleotide-binding proteins (G-proteins) during non-canonical Wnt signaling. Binds to ligand-activated Wnt receptor FZD7, displacing DVL1 from the FZD7 receptor and leading to inhibition of canonical Wnt signaling. Acts as a non-receptor guanine nucleotide exchange factor by also binding to guanine nucleotide-binding protein G(i) alpha (Gi-alpha) subunits, leading to their activation. Binding to Gi-alpha subunits displaces the beta and gamma subunits from the heterotrimeric G-protein complex, triggering non-canonical Wnt responses such as activation of RAC1 and PI3K-AKT signaling. Promotes apical constriction of cells via ARHGEF18. This Mus musculus (Mouse) protein is Protein Daple (Ccdc88c).